The chain runs to 316 residues: Phospho-N-acetylmuramoyl-pentapeptide-transferase (316 aa).

The next 10 membrane-spanning stretches (helical) occupy residues 5–25 (IIFA…FFIP), 52–72 (TMGG…FSPW), 76–96 (LFIL…DDFL), 116–136 (FLLA…EIIV), 145–165 (LANF…NSVN), 172–192 (GLAA…ALFL), 195–212 (VTYG…LGFL), 221–241 (VFMG…VALL), 244–264 (LPLI…SVIL), and 296–316 (VVYS…YSLS).

Belongs to the glycosyltransferase 4 family. MraY subfamily. The cofactor is Mg(2+).

It is found in the cell membrane. The catalysed reaction is UDP-N-acetyl-alpha-D-muramoyl-L-alanyl-gamma-D-glutamyl-meso-2,6-diaminopimeloyl-D-alanyl-D-alanine + di-trans,octa-cis-undecaprenyl phosphate = di-trans,octa-cis-undecaprenyl diphospho-N-acetyl-alpha-D-muramoyl-L-alanyl-D-glutamyl-meso-2,6-diaminopimeloyl-D-alanyl-D-alanine + UMP. Its pathway is cell wall biogenesis; peptidoglycan biosynthesis. In terms of biological role, catalyzes the initial step of the lipid cycle reactions in the biosynthesis of the cell wall peptidoglycan: transfers peptidoglycan precursor phospho-MurNAc-pentapeptide from UDP-MurNAc-pentapeptide onto the lipid carrier undecaprenyl phosphate, yielding undecaprenyl-pyrophosphoryl-MurNAc-pentapeptide, known as lipid I. The chain is Phospho-N-acetylmuramoyl-pentapeptide-transferase from Caldanaerobacter subterraneus subsp. tengcongensis (strain DSM 15242 / JCM 11007 / NBRC 100824 / MB4) (Thermoanaerobacter tengcongensis).